We begin with the raw amino-acid sequence, 644 residues long: Exoribonuclease 2 (644 aa).

An RNB domain is found at 189–516 (RRDLTALDFV…NHRLLKAIIK (328 aa)). The region spanning 561 to 643 (DTRFAAEIID…ETRSIIARPA (83 aa)) is the S1 motif domain.

It belongs to the RNR ribonuclease family. RNase II subfamily.

It localises to the cytoplasm. The enzyme catalyses Exonucleolytic cleavage in the 3'- to 5'-direction to yield nucleoside 5'-phosphates.. Its function is as follows. Involved in mRNA degradation. Hydrolyzes single-stranded polyribonucleotides processively in the 3' to 5' direction. The sequence is that of Exoribonuclease 2 from Klebsiella pneumoniae subsp. pneumoniae (strain ATCC 700721 / MGH 78578).